A 686-amino-acid polypeptide reads, in one-letter code: ATP-dependent zinc metalloprotease FtsH 2 (686 aa).

Residues 1–11 are Cytoplasmic-facing; sequence MKKNIKDIFKN. Residues 12-32 traverse the membrane as a helical segment; the sequence is FNIFWFCFIFLLLSLLYCLIM. Over 33 to 178 the chain is Extracellular; the sequence is MEISHQHDNN…LQRIPYQPYF (146 aa). The helical transmembrane segment at 179 to 199 threads the bilayer; that stretch reads GFAPFISAVNICILIIIFYFI. Residues 200–686 lie on the Cytoplasmic side of the membrane; sequence YNSIEKTSAQ…QKSEKEDCNK (487 aa). 272–279 is a binding site for ATP; that stretch reads GPPGVGKT. His-493 lines the Zn(2+) pocket. Glu-494 is an active-site residue. His-497 and Asp-569 together coordinate Zn(2+).

In the central section; belongs to the AAA ATPase family. This sequence in the C-terminal section; belongs to the peptidase M41 family. In terms of assembly, homohexamer. The cofactor is Zn(2+).

It localises to the cell membrane. Its function is as follows. Acts as a processive, ATP-dependent zinc metallopeptidase for both cytoplasmic and membrane proteins. Plays a role in the quality control of integral membrane proteins. This is ATP-dependent zinc metalloprotease FtsH 2 from Phytoplasma mali (strain AT).